The following is a 286-amino-acid chain: Phosphoribosylaminoimidazole-succinocarboxamide synthase (286 aa).

It belongs to the SAICAR synthetase family.

The enzyme catalyses 5-amino-1-(5-phospho-D-ribosyl)imidazole-4-carboxylate + L-aspartate + ATP = (2S)-2-[5-amino-1-(5-phospho-beta-D-ribosyl)imidazole-4-carboxamido]succinate + ADP + phosphate + 2 H(+). Its pathway is purine metabolism; IMP biosynthesis via de novo pathway; 5-amino-1-(5-phospho-D-ribosyl)imidazole-4-carboxamide from 5-amino-1-(5-phospho-D-ribosyl)imidazole-4-carboxylate: step 1/2. This chain is Phosphoribosylaminoimidazole-succinocarboxamide synthase (purC), found in Pasteurella multocida (strain Pm70).